The primary structure comprises 502 residues: ATP synthase subunit alpha 1/3 (502 aa).

169 to 176 serves as a coordination point for ATP; that stretch reads GDRQTGKT.

This sequence belongs to the ATPase alpha/beta chains family. In terms of assembly, F-type ATPases have 2 components, CF(1) - the catalytic core - and CF(0) - the membrane proton channel. CF(1) has five subunits: alpha(3), beta(3), gamma(1), delta(1), epsilon(1). CF(0) has three main subunits: a(1), b(2) and c(9-12). The alpha and beta chains form an alternating ring which encloses part of the gamma chain. CF(1) is attached to CF(0) by a central stalk formed by the gamma and epsilon chains, while a peripheral stalk is formed by the delta and b chains.

It localises to the cell inner membrane. It carries out the reaction ATP + H2O + 4 H(+)(in) = ADP + phosphate + 5 H(+)(out). Functionally, produces ATP from ADP in the presence of a proton gradient across the membrane. The alpha chain is a regulatory subunit. This is ATP synthase subunit alpha 1/3 from Syntrophotalea carbinolica (strain DSM 2380 / NBRC 103641 / GraBd1) (Pelobacter carbinolicus).